The sequence spans 575 residues: Alpha-(1,6)-fucosyltransferase (575 aa).

Residues 1-9 (MRAWTGSWR) are Cytoplasmic-facing. The helical; Signal-anchor for type II membrane protein transmembrane segment at 10–30 (WIMLILFAWGTLLFYIGGHLV) threads the bilayer. At 31 to 575 (RDNDHPDHSS…KYPTYPEAEK (545 aa)) the chain is on the lumenal side. Intrachain disulfides connect Cys-204-Cys-266, Cys-212-Cys-230, and Cys-218-Cys-222. Positions 206–493 (KARKLVCNIN…PDASANFHSL (288 aa)) constitute a GT23 domain. A Phosphoserine modification is found at Ser-278. An SH3-binding motif is present at residues 299–305 (PRPPYLP). The interval 365 to 366 (RR) is important for donor substrate binding. An intrachain disulfide couples Cys-465 to Cys-472. One can recognise an SH3 domain in the interval 502–563 (QNAHNQIAVY…PSYKVREKIE (62 aa)).

Belongs to the glycosyltransferase 23 family. Tyrosine phosphorylated by PKDCC/VLK.

Its subcellular location is the golgi apparatus. The protein resides in the golgi stack membrane. It carries out the reaction N(4)-{beta-D-GlcNAc-(1-&gt;2)-alpha-D-Man-(1-&gt;3)-[beta-D-GlcNAc-(1-&gt;2)-alpha-D-Man-(1-&gt;6)]-beta-D-Man-(1-&gt;4)-beta-D-GlcNAc-(1-&gt;4)-beta-D-GlcNAc}-L-asparaginyl-[protein] + GDP-beta-L-fucose = an N(4)-{beta-D-GlcNAc-(1-&gt;2)-alpha-D-Man-(1-&gt;3)-[beta-D-GlcNAc-(1-&gt;2)-alpha-D-Man-(1-&gt;6)]-beta-D-Man-(1-&gt;4)-beta-D-GlcNAc-(1-&gt;4)-[alpha-L-Fuc-(1-&gt;6)]-beta-D-GlcNAc}-L-asparaginyl-[protein] + GDP + H(+). The protein operates within protein modification; protein glycosylation. In terms of biological role, catalyzes the addition of fucose in alpha 1-6 linkage to the first GlcNAc residue, next to the peptide chains in N-glycans. The chain is Alpha-(1,6)-fucosyltransferase (Fut8) from Mus musculus (Mouse).